We begin with the raw amino-acid sequence, 807 residues long: Glycerol-3-phosphate acyltransferase (807 aa).

An HXXXXD motif motif is present at residues 305–310; sequence CHRSHM.

The protein belongs to the GPAT/DAPAT family.

It localises to the cell inner membrane. The catalysed reaction is sn-glycerol 3-phosphate + an acyl-CoA = a 1-acyl-sn-glycero-3-phosphate + CoA. It functions in the pathway phospholipid metabolism; CDP-diacylglycerol biosynthesis; CDP-diacylglycerol from sn-glycerol 3-phosphate: step 1/3. The sequence is that of Glycerol-3-phosphate acyltransferase from Aliivibrio fischeri (strain MJ11) (Vibrio fischeri).